Reading from the N-terminus, the 324-residue chain is Glyoxylate/hydroxypyruvate reductase B (324 aa).

Catalysis depends on residues Arg-237 and Glu-266. The active-site Proton donor is the His-285.

It belongs to the D-isomer specific 2-hydroxyacid dehydrogenase family. GhrB subfamily. In terms of assembly, homodimer.

Its subcellular location is the cytoplasm. The catalysed reaction is glycolate + NADP(+) = glyoxylate + NADPH + H(+). The enzyme catalyses (R)-glycerate + NAD(+) = 3-hydroxypyruvate + NADH + H(+). It carries out the reaction (R)-glycerate + NADP(+) = 3-hydroxypyruvate + NADPH + H(+). Functionally, catalyzes the NADPH-dependent reduction of glyoxylate and hydroxypyruvate into glycolate and glycerate, respectively. The polypeptide is Glyoxylate/hydroxypyruvate reductase B (Citrobacter koseri (strain ATCC BAA-895 / CDC 4225-83 / SGSC4696)).